The chain runs to 402 residues: Uroporphyrinogen decarboxylase 1, chloroplastic (402 aa).

A chloroplast-targeting transit peptide spans 1–50 (MISATATAAFLAAAPASSSSCTTHRRRSGLPAISASLATASSTEEPLLVR). Residues 67 to 71 (RQAGR), Phe-86, Ser-116, Asp-117, Tyr-193, Ser-248, and His-363 contribute to the substrate site.

It belongs to the uroporphyrinogen decarboxylase family. As to quaternary structure, homodimer.

The protein resides in the plastid. It is found in the chloroplast. The catalysed reaction is uroporphyrinogen III + 4 H(+) = coproporphyrinogen III + 4 CO2. It participates in porphyrin-containing compound metabolism; protoporphyrin-IX biosynthesis; coproporphyrinogen-III from 5-aminolevulinate: step 4/4. In terms of biological role, catalyzes the decarboxylation of four acetate groups of uroporphyrinogen-III to yield coproporphyrinogen-III. This is Uroporphyrinogen decarboxylase 1, chloroplastic from Oryza sativa subsp. japonica (Rice).